A 711-amino-acid chain; its full sequence is Nucleolin (711 aa).

Residues 1 to 304 form a disordered region; sequence MVKLAKAGKN…KKQKVEGTEP (304 aa). An N6-acetyllysine mark is found at lysine 9, lysine 15, and lysine 16. Residues 24–43 show a composition bias toward acidic residues; the sequence is VEEDSEDEEMSEDEEDDSSG. A phosphoserine mark is found at serine 28, serine 34, serine 41, and serine 42. Residues 56-107 are compositionally biased toward low complexity; it reads AAATSAKKVVVSPTKKVAVATPAKKAAVTPGKKAAATPAKKTVTPAKAVATP. Copy 1 of the repeat occupies 58–65; that stretch reads ATSAKKVV. Residues 58–135 are 8 X 8 AA tandem repeats of X-T-P-X-K-K-X-X; that stretch reads ATSAKKVVVS…GAAIPAKGAK (78 aa). The residue at position 67 (serine 67) is a Phosphoserine. 4 positions are modified to phosphothreonine: threonine 69, threonine 76, threonine 84, and threonine 92. Repeat copies occupy residues 75 to 82, 83 to 90, and 91 to 98. Lysine 96 carries the N6-acetyllysine modification. At threonine 99 the chain carries Phosphothreonine. The 5; truncated repeat unit spans residues 99–104; that stretch reads TPAKAV. Lysine 102 carries the post-translational modification N6-acetyllysine. Repeat unit 6 spans residues 105 to 112; the sequence is ATPGKKGA. Position 106 is a phosphothreonine (threonine 106). Lysine 109 is subject to N6-acetyllysine. Residue threonine 113 is modified to Phosphothreonine. Position 116 is an N6-acetyllysine (lysine 116). A run of 2 repeats spans residues 120–127 and 128–135. Position 121 is a phosphothreonine (threonine 121). Low complexity predominate over residues 122-137; the sequence is PGKKGAAIPAKGAKNG. An N6-acetyllysine modification is found at lysine 124. Residues serine 145, serine 153, serine 184, and serine 207 each carry the phosphoserine modification. Composition is skewed to acidic residues over residues 145–171 and 184–212; these read SDEE…DEIE and SEDE…EEAM. Threonine 215 carries the phosphothreonine modification. Residues 235–273 show a composition bias toward acidic residues; sequence EDEDEEEDDEDEDDDDDEDDEDEDDDDEDEEEEEEEEEP. Positions 274-301 are enriched in basic and acidic residues; sequence VKEAPGKRKKEMAKQKAAPEAKKQKVEG. Residue lysine 298 forms a Glycyl lysine isopeptide (Lys-Gly) (interchain with G-Cter in SUMO1); alternate linkage. Lysine 298 participates in a covalent cross-link: Glycyl lysine isopeptide (Lys-Gly) (interchain with G-Cter in SUMO2); alternate. Threonine 302 bears the Phosphothreonine mark. RRM domains are found at residues 308–384 and 394–467; these read FNLF…KPKG and RTLL…YTGE. Lysine 319 carries the N6-acetyllysine modification. A Glycyl lysine isopeptide (Lys-Gly) (interchain with G-Cter in SUMO1); alternate cross-link involves residue lysine 325. A Glycyl lysine isopeptide (Lys-Gly) (interchain with G-Cter in SUMO2); alternate cross-link involves residue lysine 325. Lysine 349 is modified (N6-acetyllysine). Position 357 is a phosphoserine (serine 357). The residue at position 368 (threonine 368) is a Phosphothreonine. Lysine 371 is covalently cross-linked (Glycyl lysine isopeptide (Lys-Gly) (interchain with G-Cter in SUMO2)). A Glycyl lysine isopeptide (Lys-Gly) (interchain with G-Cter in SUMO2); alternate cross-link involves residue lysine 378. At lysine 378 the chain carries N6-acetyllysine; alternate. 2 positions are modified to N6-acetyllysine: lysine 399 and lysine 404. Position 406 is a phosphothreonine (threonine 406). N6-acetyllysine occurs at positions 428 and 445. Serine 459 and serine 461 each carry phosphoserine. N6-acetyllysine occurs at positions 468 and 478. The RRM 3 domain occupies 487–561; it reads KTLVLSNLSY…RAIRLELQGP (75 aa). Lysine 514 is covalently cross-linked (Glycyl lysine isopeptide (Lys-Gly) (interchain with G-Cter in SUMO2); alternate). Lysine 514 carries the post-translational modification N6-acetyllysine; alternate. Lysine 522 carries the N6-acetyllysine modification. Phosphoserine is present on serine 564. At lysine 573 the chain carries N6-acetyllysine. Residues 573–648 form the RRM 4 domain; it reads KTLFVKGLSE…NKVTLDWAKP (76 aa). A Glycyl lysine isopeptide (Lys-Gly) (interchain with G-Cter in SUMO2); alternate cross-link involves residue lysine 578. Lysine 578 bears the N6-acetyllysine; alternate mark. Serine 581 is subject to Phosphoserine. Residue lysine 590 forms a Glycyl lysine isopeptide (Lys-Gly) (interchain with G-Cter in SUMO1); alternate linkage. A Glycyl lysine isopeptide (Lys-Gly) (interchain with G-Cter in SUMO2); alternate cross-link involves residue lysine 590. Serine 592 and serine 620 each carry phosphoserine. Residue lysine 625 forms a Glycyl lysine isopeptide (Lys-Gly) (interchain with G-Cter in SUMO2) linkage. The disordered stretch occupies residues 641 to 711; it reads VTLDWAKPKG…KPQGKKTKFE (71 aa). Lysine 647 carries the post-translational modification N6-acetyllysine. Gly residues predominate over residues 651–697; that stretch reads EGGFGGRGGGRGGFGGRGGGRGGRGGFGGRGRGGFGGRGGFRGGRGG. 9 positions are modified to asymmetric dimethylarginine: arginine 657, arginine 661, arginine 667, arginine 671, arginine 674, arginine 680, arginine 682, arginine 688, and arginine 692. At arginine 695 the chain carries Asymmetric dimethylarginine; alternate. An Omega-N-methylarginine; alternate modification is found at arginine 695. The segment covering 698-711 has biased composition (basic and acidic residues); sequence GGDHKPQGKKTKFE.

As to quaternary structure, identified in a IGF2BP1-dependent mRNP granule complex containing untranslated mRNAs. Component of the SWAP complex that consists of NPM1, NCL/nucleolin, PARP1 and SWAP70. Component of a complex which is at least composed of HTATSF1/Tat-SF1, the P-TEFb complex components CDK9 and CCNT1, RNA polymerase II, SUPT5H, and NCL/nucleolin. Interacts with AICDA. Interacts with APTX. Interacts with C1QBP. Interacts with ERBB4. Interacts (via C-terminus) with FMR1 isoform 6 (via N-terminus). Interacts with GZF1; this interaction is important for nucleolar localization of GZF1. Interacts with NSUN2. Interacts with NVL. Interacts (via N-terminus domain) with SETX. Interacts (via RRM1 and C-terminal RRM4/Arg/Gly-rich domains) with TERT; the interaction is important for nucleolar localization of TERT. Interacts with WDR46. Interacts with ZFP36. Interacts with LRRC34. Interacts with RRP1B. Interacts with HNRNPU; this interaction occurs during mitosis. Interacts with RIOK1; RIOK1 recruits NCL to PRMT5 for symmetrically methylation. Interacts with ZBTB7B. Interacts with MDK; this interaction promotes NCL clustering and lateral movements of this complex into lipid rafts leading to MDK internalization. Interacts with HDGF. Interacts with ALKBH2. Interacts with IGFBP5; this interaction is necessary for IGFBP5 localization to the nucleus. In terms of processing, some glutamate residues are glycylated by TTLL8. This modification occurs exclusively on glutamate residues and results in a glycine chain on the gamma-carboxyl group. Symmetrically methylated by PRMT5.

It localises to the nucleus. Its subcellular location is the nucleolus. It is found in the cytoplasm. In terms of biological role, nucleolin is the major nucleolar protein of growing eukaryotic cells. It is found associated with intranucleolar chromatin and pre-ribosomal particles. It induces chromatin decondensation by binding to histone H1. It is thought to play a role in pre-rRNA transcription and ribosome assembly. May play a role in the process of transcriptional elongation. Binds RNA oligonucleotides with 5'-UUAGGG-3' repeats more tightly than the telomeric single-stranded DNA 5'-TTAGGG-3' repeats. This is Nucleolin (NCL) from Macaca fascicularis (Crab-eating macaque).